We begin with the raw amino-acid sequence, 1374 residues long: Mitogen-activated protein kinase kinase kinase 5 (1374 aa).

Residues 68-87 (PAATSSSSATRGRGSSVGGG) are disordered. Over residues 69 to 81 (AATSSSSATRGRG) the composition is skewed to low complexity. Asymmetric dimethylarginine; by PRMT1 is present on residues R78 and R80. S83 is modified (phosphoserine; by PIM1 and PKB/AKT1). Residues 649–1374 (MVNTITEEKG…AIIDFRNKQT (726 aa)) are interaction with PPIA/CYPA. The Protein kinase domain occupies 680–938 (NGDRVVLGKG…ANDLLVDEFL (259 aa)). ATP-binding positions include 686 to 694 (LGKGTYGIV) and K709. Y718 bears the Phosphotyrosine mark. D803 acts as the Proton acceptor in catalysis. T813 is subject to Phosphothreonine; by autocatalysis. A Phosphothreonine; by autocatalysis, MELK and MAP3K6 modification is found at T838. T842 bears the Phosphothreonine; by autocatalysis mark. Residue S958 is modified to Phosphoserine. S966 is subject to Phosphoserine; by autocatalysis. S1029 and S1033 each carry phosphoserine. Positions 1182–1209 (SESDTADQEDLDVEDDHEEQPSNQTVRR) are disordered. The segment covering 1185–1199 (DTADQEDLDVEDDHE) has biased composition (acidic residues). Residues 1245-1285 (LGRMKIETNRLLEELVRKEKELQALLHRAIEEKDQEIKHLK) are a coiled coil.

It belongs to the protein kinase superfamily. STE Ser/Thr protein kinase family. MAP kinase kinase kinase subfamily. As to quaternary structure, homodimer when inactive. Binds both upstream activators and downstream substrates in multimolecular complexes. Part of a cytoplasmic complex made of HIPK1, DAB2IP and MAP3K5 in response to TNF. This complex formation promotes MAP3K5-JNK activation and subsequent apoptosis. Interacts with SOCS1 which recognizes phosphorylation of Tyr-718 and induces MAP3K5/ASK1 degradation in endothelial cells. Interacts with the 14-3-3 family proteins such as YWHAB, YWHAE, YWHAQ, YWHAH, YWHAZ and SFN. Interacts with ARRB2, BIRC2, DAB2IP, IGF1R, MAP3K6/ASK2, PGAM5, PIM1, PPP5C, SOCS1, STUB1, TRAF2, TRAF6 and TXN. Interacts with ERN1 in a TRAF2-dependent manner. Interacts with calcineurin subunit PPP3R1. Interacts with PPM1L. Interacts (via N-terminus) with RAF1 and this interaction inhibits the proapoptotic function of MAP3K5. Interacts with DAB2IP (via N-terminus C2 domain); the interaction occurs in a TNF-alpha-dependent manner. Interacts with DUSP13A; may positively regulate apoptosis. Interacts with DAXX. Interacts with RC3H2. Interacts with PPIA/CYPA. Interacts with PRMT1; the interaction results in MAP3K5 methylation by PRMT1 which inhibits MAP3K5 activation. Interacts with TRAF2; the interaction is inhibited by PRMT1. Interacts with TRIM48. In terms of assembly, (Microbial infection) Interacts with HIV-1 Nef; this interaction inhibits MAP3K5 signaling. The cofactor is Mg(2+). Post-translationally, phosphorylated at Thr-838 through autophosphorylation and by MAP3K6/ASK2 which leads to activation. Thr-838 is dephosphorylated by PPP5C. Ser-83 and Ser-1033 are inactivating phosphorylation sites, the former of which is phosphorylated by AKT1. Phosphorylated at Ser-966 which induces association of MAP3K5/ASK1 with the 14-3-3 family proteins and suppresses MAP3K5/ASK1 activity. Calcineurin (CN) dephosphorylates this site. Also dephosphorylated and activated by PGAM5. Phosphorylation at Ser-966 in response to oxidative stress is negatively regulated by PPIA/CYPA. In terms of processing, ubiquitinated. Tumor necrosis factor (TNF) induces TNFR2-dependent ubiquitination, leading to proteasomal degradation. Ubiquitinated by RC3H2 in a TRIM48-dependent manner. Methylation at Arg-78 and Arg-80 by PRMT1 promotes association of MAP3K5 with thioredoxin and negatively regulates MAP3K5 association with TRAF2, inhibiting MAP3K5 activation. Methylation is blocked by ubiquitination of PRMT1 by TRIM48. Abundantly expressed in heart and pancreas.

The protein resides in the cytoplasm. It is found in the endoplasmic reticulum. It catalyses the reaction L-seryl-[protein] + ATP = O-phospho-L-seryl-[protein] + ADP + H(+). It carries out the reaction L-threonyl-[protein] + ATP = O-phospho-L-threonyl-[protein] + ADP + H(+). With respect to regulation, activated by various stressors, including oxidative stress, endoplasmic reticulum stress, and calcium overload, as well as by receptor-mediated inflammatory signals, such as the tumor necrosis factor (TNF) and lipopolysaccharide (LPS). Homophilic association of MAP3K5/ASK1 through the C-terminal coiled-coil domains and the heteromeric complex formation of MAP3K5/ASK1 with the reduced form of thioredoxin (TXN), constitutes an inactive form of the kinase. Upon ROS-induced dissociation of TXN from MAP3K5/ASK1, TRAF2 and TRAF6 are reciprocally recruited to MAP3K5/ASK1 and form the active MAP3K5/ASK1 signalosome, in which TRAF2 and TRAF6 appear to facilitate the active configuration of MAP3K5/ASK1. MAP3K5/ASK1 activity is also regulated through several phosphorylation and dephosphorylation events. Thr-838 is an activating phosphorylation site that is autophosphorylated and phosphorylated by MAP3K6/ASK2 and dephosphorylated by PPP5C. Ser-83 and Ser-1033 are inactivating phosphorylation sites, the former of which is phosphorylated by AKT1. Phosphorylation of Ser-966 induces association of MAP3K5/ASK1 with the 14-3-3 family proteins, which suppresses MAP3K5/ASK1 activity. Calcium/calmodulin-activated protein phosphatase calcineurin (PPP3CA) has been shown to directly dephosphorylate this site. SOCS1 binds to ASK1 by recognizing phosphorylation of Tyr-718 and induces MAP3K5/ASK1 degradation in endothelial cells. Also dephosphorylated and activated by PGAM5. Contains an N-terminal autoinhibitory domain. Once activated targeted for proteasomal degradation by RC3H2-mediated ubiquitination. Serine/threonine kinase which acts as an essential component of the MAP kinase signal transduction pathway. Plays an important role in the cascades of cellular responses evoked by changes in the environment. Mediates signaling for determination of cell fate such as differentiation and survival. Plays a crucial role in the apoptosis signal transduction pathway through mitochondria-dependent caspase activation. MAP3K5/ASK1 is required for the innate immune response, which is essential for host defense against a wide range of pathogens. Mediates signal transduction of various stressors like oxidative stress as well as by receptor-mediated inflammatory signals, such as the tumor necrosis factor (TNF) or lipopolysaccharide (LPS). Once activated, acts as an upstream activator of the MKK/JNK signal transduction cascade and the p38 MAPK signal transduction cascade through the phosphorylation and activation of several MAP kinase kinases like MAP2K4/SEK1, MAP2K3/MKK3, MAP2K6/MKK6 and MAP2K7/MKK7. These MAP2Ks in turn activate p38 MAPKs and c-jun N-terminal kinases (JNKs). Both p38 MAPK and JNKs control the transcription factors activator protein-1 (AP-1). In Homo sapiens (Human), this protein is Mitogen-activated protein kinase kinase kinase 5 (MAP3K5).